Consider the following 1032-residue polypeptide: Connector enhancer of kinase suppressor of ras 2 (1032 aa).

Positions 11–76 (WSPSQVVDWM…LEAVDLLCAL (66 aa)) constitute an SAM domain. Ser-12 is subject to Phosphoserine. The 95-residue stretch at 84–178 (NLKTLSHKLN…TIVQQDCTVY (95 aa)) folds into the CRIC domain. Residues 215–297 (VIQLANIKPS…GVILTLKKRP (83 aa)) enclose the PDZ domain. The DUF1170 domain occupies 302-515 (TSAPALLKNM…PAHYSLLPSL (214 aa)). Low complexity predominate over residues 324–340 (RSPTSSVATPSSTISTP). Residues 324-349 (RSPTSSVATPSSTISTPTKRDSSALQ) form a disordered region. Ser-338 and Ser-390 each carry phosphoserine. Disordered stretches follow at residues 480–509 (EEYM…PAHY) and 538–558 (FQQS…ISGK). A compositionally biased stretch (basic residues) spans 545 to 558 (HKSKKKNKGAISGK). Residues 570 to 669 (RGDCEGWLWK…WLNRINMLTA (100 aa)) form the PH domain. A disordered region spans residues 682–766 (DYWSESDKEE…PIRKTASQRR (85 aa)). Residue Tyr-683 is modified to Phosphotyrosine. A compositionally biased stretch (acidic residues) spans 683–693 (YWSESDKEEAD). Residues Ser-685 and Ser-687 each carry the phosphoserine modification. Positions 701-714 (DSPPPPYDTYPRPP) are enriched in pro residues. Residues 730-740 (LSSTETSQSQS) are compositionally biased toward low complexity. Phosphoserine is present on residues Ser-756 and Ser-767. Residues 864 to 900 (ACDPQDDIQPPEVEEEEEEEEEEAAGENVGEKNENRE) are disordered. The stretch at 874–917 (PEVEEEEEEEEEEAAGENVGEKNENREEKLGDSLQDLYRALEEA) forms a coiled coil. The segment covering 875 to 888 (EVEEEEEEEEEEAA) has biased composition (acidic residues). Position 906 is a phosphoserine (Ser-906).

Belongs to the CNKSR family. In terms of assembly, interacts with RAF1, RAB2L and RAL GTPase proteins. In terms of processing, phosphorylated on tyrosine.

Its subcellular location is the cytoplasm. It localises to the membrane. May function as an adapter protein or regulator of Ras signaling pathways. This Mus musculus (Mouse) protein is Connector enhancer of kinase suppressor of ras 2 (Cnksr2).